A 189-amino-acid chain; its full sequence is Orotate phosphoribosyltransferase (189 aa).

5-phospho-alpha-D-ribose 1-diphosphate contacts are provided by residues arginine 99, lysine 100, lysine 103, histidine 105, and 126-134 (EDVITTGGS). Orotate-binding residues include threonine 130 and arginine 158.

This sequence belongs to the purine/pyrimidine phosphoribosyltransferase family. PyrE subfamily. Homodimer. Mg(2+) is required as a cofactor.

The catalysed reaction is orotidine 5'-phosphate + diphosphate = orotate + 5-phospho-alpha-D-ribose 1-diphosphate. The protein operates within pyrimidine metabolism; UMP biosynthesis via de novo pathway; UMP from orotate: step 1/2. Functionally, catalyzes the transfer of a ribosyl phosphate group from 5-phosphoribose 1-diphosphate to orotate, leading to the formation of orotidine monophosphate (OMP). This is Orotate phosphoribosyltransferase from Thermosynechococcus vestitus (strain NIES-2133 / IAM M-273 / BP-1).